Reading from the N-terminus, the 61-residue chain is Large ribosomal subunit protein bL28 (61 aa).

The interval 1–27 is disordered; the sequence is MAKDFVTGKKTTFGNTRSHALNSSSRS. The span at 9-27 shows a compositional bias: polar residues; the sequence is KKTTFGNTRSHALNSSSRS.

The protein belongs to the bacterial ribosomal protein bL28 family.

The protein is Large ribosomal subunit protein bL28 of Lactobacillus delbrueckii subsp. bulgaricus (strain ATCC 11842 / DSM 20081 / BCRC 10696 / JCM 1002 / NBRC 13953 / NCIMB 11778 / NCTC 12712 / WDCM 00102 / Lb 14).